The sequence spans 445 residues: Phosphoglucosamine mutase (445 aa).

The Phosphoserine intermediate role is filled by Ser-102. Mg(2+) contacts are provided by Ser-102, Asp-241, Asp-243, and Asp-245. Ser-102 bears the Phosphoserine mark.

Belongs to the phosphohexose mutase family. Mg(2+) serves as cofactor. Activated by phosphorylation.

The catalysed reaction is alpha-D-glucosamine 1-phosphate = D-glucosamine 6-phosphate. Its function is as follows. Catalyzes the conversion of glucosamine-6-phosphate to glucosamine-1-phosphate. The chain is Phosphoglucosamine mutase from Acinetobacter baumannii (strain AB0057).